A 111-amino-acid polypeptide reads, in one-letter code: uncharacterized protein (111 aa).

This is an uncharacterized protein from Acanthamoeba polyphaga mimivirus (APMV).